Here is a 556-residue protein sequence, read N- to C-terminus: 2-succinyl-5-enolpyruvyl-6-hydroxy-3-cyclohexene-1-carboxylate synthase (556 aa).

The protein belongs to the TPP enzyme family. MenD subfamily. In terms of assembly, homodimer. Mg(2+) serves as cofactor. The cofactor is Mn(2+). Requires thiamine diphosphate as cofactor.

It catalyses the reaction isochorismate + 2-oxoglutarate + H(+) = 5-enolpyruvoyl-6-hydroxy-2-succinyl-cyclohex-3-ene-1-carboxylate + CO2. It participates in quinol/quinone metabolism; 1,4-dihydroxy-2-naphthoate biosynthesis; 1,4-dihydroxy-2-naphthoate from chorismate: step 2/7. It functions in the pathway quinol/quinone metabolism; menaquinone biosynthesis. Its function is as follows. Catalyzes the thiamine diphosphate-dependent decarboxylation of 2-oxoglutarate and the subsequent addition of the resulting succinic semialdehyde-thiamine pyrophosphate anion to isochorismate to yield 2-succinyl-5-enolpyruvyl-6-hydroxy-3-cyclohexene-1-carboxylate (SEPHCHC). This chain is 2-succinyl-5-enolpyruvyl-6-hydroxy-3-cyclohexene-1-carboxylate synthase, found in Escherichia coli O17:K52:H18 (strain UMN026 / ExPEC).